A 355-amino-acid chain; its full sequence is F-box only protein 32 (355 aa).

The Nuclear localization signal signature appears at 62-67 (KKRKKD). Positions 169 to 173 (LLQTL) match the Nuclear export signal motif. One can recognise an F-box domain in the interval 223-271 (LTITDLPVCLQLNIMQRLSDGRDLVSLGQAAPDLHVLSEDRLLWKRLCQ). A Bipartite nuclear localization signal motif is present at residues 280–295 (RKRLILSDKGQLDWKK).

As to quaternary structure, part of the SCF (SKP1-CUL1-F-box) E3 ubiquitin-protein ligase complex SCF(FBXO32) formed of CUL1, SKP1, RBX1 and FBXO32. In terms of tissue distribution, specifically expressed in cardiac and skeletal muscle.

The protein localises to the cytoplasm. Its subcellular location is the nucleus. Its pathway is protein modification; protein ubiquitination. Substrate recognition component of a SCF (SKP1-CUL1-F-box protein) E3 ubiquitin-protein ligase complex which mediates the ubiquitination and subsequent proteasomal degradation of target proteins. Probably recognizes and binds to phosphorylated target proteins during skeletal muscle atrophy. Recognizes TERF1. This is F-box only protein 32 (Fbxo32) from Mus musculus (Mouse).